The primary structure comprises 100 residues: NADH-quinone oxidoreductase subunit K 1 (100 aa).

3 helical membrane-spanning segments follow: residues 4-24 (LNNY…GVLV), 29-49 (IVIF…FIAF), and 60-80 (IFVF…LALM).

The protein belongs to the complex I subunit 4L family. In terms of assembly, NDH-1 is composed of 14 different subunits. Subunits NuoA, H, J, K, L, M, N constitute the membrane sector of the complex.

Its subcellular location is the cell inner membrane. The catalysed reaction is a quinone + NADH + 5 H(+)(in) = a quinol + NAD(+) + 4 H(+)(out). In terms of biological role, NDH-1 shuttles electrons from NADH, via FMN and iron-sulfur (Fe-S) centers, to quinones in the respiratory chain. The immediate electron acceptor for the enzyme in this species is believed to be ubiquinone. Couples the redox reaction to proton translocation (for every two electrons transferred, four hydrogen ions are translocated across the cytoplasmic membrane), and thus conserves the redox energy in a proton gradient. This is NADH-quinone oxidoreductase subunit K 1 from Geotalea daltonii (strain DSM 22248 / JCM 15807 / FRC-32) (Geobacter daltonii).